The primary structure comprises 141 residues: Large ribosomal subunit protein uL16 (141 aa).

Belongs to the universal ribosomal protein uL16 family. In terms of assembly, part of the 50S ribosomal subunit.

Functionally, binds 23S rRNA and is also seen to make contacts with the A and possibly P site tRNAs. The sequence is that of Large ribosomal subunit protein uL16 from Microchaete diplosiphon (Fremyella diplosiphon).